Consider the following 133-residue polypeptide: Small ribosomal subunit protein uS8 (133 aa).

It belongs to the universal ribosomal protein uS8 family. As to quaternary structure, part of the 30S ribosomal subunit. Contacts proteins S5 and S12.

Its function is as follows. One of the primary rRNA binding proteins, it binds directly to 16S rRNA central domain where it helps coordinate assembly of the platform of the 30S subunit. In Synechococcus sp. (strain WH7803), this protein is Small ribosomal subunit protein uS8.